Reading from the N-terminus, the 119-residue chain is Large ribosomal subunit protein bL20 (119 aa).

It belongs to the bacterial ribosomal protein bL20 family.

Its function is as follows. Binds directly to 23S ribosomal RNA and is necessary for the in vitro assembly process of the 50S ribosomal subunit. It is not involved in the protein synthesizing functions of that subunit. The chain is Large ribosomal subunit protein bL20 from Streptococcus suis (strain 98HAH33).